Reading from the N-terminus, the 415-residue chain is Serine hydroxymethyltransferase (415 aa).

(6S)-5,6,7,8-tetrahydrofolate-binding positions include Leu-117 and 121 to 123 (GHL). Lys-226 is modified (N6-(pyridoxal phosphate)lysine). Residue Glu-241 participates in (6S)-5,6,7,8-tetrahydrofolate binding.

This sequence belongs to the SHMT family. As to quaternary structure, homodimer. Requires pyridoxal 5'-phosphate as cofactor.

It is found in the cytoplasm. The enzyme catalyses (6R)-5,10-methylene-5,6,7,8-tetrahydrofolate + glycine + H2O = (6S)-5,6,7,8-tetrahydrofolate + L-serine. The protein operates within one-carbon metabolism; tetrahydrofolate interconversion. It functions in the pathway amino-acid biosynthesis; glycine biosynthesis; glycine from L-serine: step 1/1. In terms of biological role, catalyzes the reversible interconversion of serine and glycine with tetrahydrofolate (THF) serving as the one-carbon carrier. This reaction serves as the major source of one-carbon groups required for the biosynthesis of purines, thymidylate, methionine, and other important biomolecules. Also exhibits THF-independent aldolase activity toward beta-hydroxyamino acids, producing glycine and aldehydes, via a retro-aldol mechanism. The sequence is that of Serine hydroxymethyltransferase from Bacillus pumilus (strain SAFR-032).